The chain runs to 384 residues: Lipid-A-disaccharide synthase 1 (384 aa).

This sequence belongs to the LpxB family.

It carries out the reaction a lipid X + a UDP-2-N,3-O-bis[(3R)-3-hydroxyacyl]-alpha-D-glucosamine = a lipid A disaccharide + UDP + H(+). It participates in bacterial outer membrane biogenesis; LPS lipid A biosynthesis. Condensation of UDP-2,3-diacylglucosamine and 2,3-diacylglucosamine-1-phosphate to form lipid A disaccharide, a precursor of lipid A, a phosphorylated glycolipid that anchors the lipopolysaccharide to the outer membrane of the cell. This is Lipid-A-disaccharide synthase 1 from Legionella pneumophila subsp. pneumophila (strain Philadelphia 1 / ATCC 33152 / DSM 7513).